The primary structure comprises 385 residues: A-type ATP synthase subunit C (385 aa).

Belongs to the V-ATPase V0D/AC39 subunit family. Has multiple subunits with at least A(3), B(3), C, D, E, F, H, I and proteolipid K(x).

Its subcellular location is the cell membrane. Functionally, component of the A-type ATP synthase that produces ATP from ADP in the presence of a proton gradient across the membrane. This chain is A-type ATP synthase subunit C, found in Methanosphaera stadtmanae (strain ATCC 43021 / DSM 3091 / JCM 11832 / MCB-3).